The sequence spans 1859 residues: MSSLASQLKSISDKSASIALNRQQRSKIHSRSLIFDPKVAASQDYDEIYDVAIDALDELCELDSRFNKFKNSLFANDSINFDRNVQSEDVVTQLDQNINAFFTLLGPYYNFTAALRASEWLVRRFQANMHNLEYMILTALPYYMQPVFIKILNVIPKQNIPQIFEWLVTAKDQLRSPTLQVCFRAFFNDNHLFTFYSSFLDEQIKRNTTYKEQLVFYLSITIQLLPASNKNTLNETLIPVVLRSSDLMLTSKNSSLRLGAYSVLAVLSAVAPLSIELLNTLTFAVLANDIALEAQFAKQTVFLLIQLWTSTTELTTSEALSKTPSLPINIIEHIDISQAKKDKFLAIYFSSIFPSETSLQLLNMIELKGNKRMFKFVVHTVLSSLKPQHLNGGVTSNNNSTNYKDTILDIVRKLIKLDQATFDEMLKSFRLTVSELELTLEGSLLATHSGDEKLDEFGDNVDRDDDTEYTKFVDERQDDKEDGDENTKFDISKLGASAPTYLDSKYNPEFYKLSFAFTRFCSKVDIKSQRAAILHFTHKVFQNPALSITFFVKSGIIFGCSIYMVKNTADGKTDFYLVLPLLLIAFNDPSSHIRAAFAQLVQLVSEITKAIHENKKKQKTLLFFESEVYANSAEKKMISPQDAIKLFAFIGSLDGMRLEEGKIATLLKSIFNGKFDKKTLGSLYQTFILNQWAQPSLPIVIKQRVWSISSQLNEMGVNGVRTYFWDTDIKPYLAKREEWLVQAKEAKLADYYNIVEKSLVQLVGGDHLSAEDSNSVSHWLCQALDSNTSLQLVANERITSIFPKLTSVESKVIILSKLVDLLVSDDYVEFDPMITLQSLPLDSAVFLQILENVKIGDQMPEQGVVKRRRRSSSSTKQAMAKSDMTNLASQHLRKLSIILEVLEVNLRKASIANPKLLKVLFKILSDLDYLGNDGNLPILYAQEVLASCLLLSISELKNSNHKHQLDSNSVRADLIVNSLRNSSSPQVQNRLLLVISELATLAPEIILHSVMPIFTFMGAHTIRQDDEFSNDALQKTVARVIPALASTNSGSFTTEIEFLLASFTAAFKHIPSHRRVRLFVALTKTLKPSNSMHILIYLLGEQYYQAKMQKNALEMRDIETFVTAYLKAFAVETQLNGLDQFSNLLNELPRHQLEENSKIYDQLRSRPIFGLAVVNSTTEELLKKRHALLEYLNSVLELDSANFDVTSLKSRIDIALKESSENDTLVLPQIRHMTSFALSELDIYTNTEPHPEISAELFVMLTSLVDLLPVVKFVESITEFLDVDKLGDNTAIKVGRNYAVLAARKFENEISLTLESVVENFSDLDKLFIVLLKGIERNVDLELQQAYLNLFAVITSKLGVDAGLTAKFSSVLIKSLGVITTSSGLLSSESEIVIASISAIVSIVNVLGIKTLGLFPKIIPPTLKIWEQTTTTTTATTTRSISATKIGRDEQNESSKLVQESVLLLLSCYIKKMPSFMVTTLDSVILTILNSDLTESQIKSSIMNLIIDRVNIGQVFKSLCSVWTQRQFYQSKNPASLGLYLNSMESTINKLEKREAISEATVFMKWLIQAFEFRDYSEKLGPPIRYQHYSSYGKFFPFVCYCLCHETQRMESSFHSCAIAYVMKLNDKSFRPLFANLVRWAIDGDNSIHDVAKTSRLLSFYRFFNKLQELLKSIVTSYYSYLVDATSECLKSFASEEDKGNKDATTLRRIVLISLSLSFTFDQDEYWSQQGRFDSICQPLLDQLSNIEESIGKFLVKTITNFVSDISSKEHSEVVLKGLVKFISYDTENLSNTKIWTIRTLKSIFQKMGEQWLSYLPILVPHIAELLEDDDEAVEIEVREGLVRVIEKVLGEPLDRYLS.

The helical transmembrane segment at 258–278 threads the bilayer; that stretch reads LGAYSVLAVLSAVAPLSIELL. Residues 578 to 616 form an HEAT 1 repeat; it reads VLPLLLIAFNDPSSHIRAAFAQLVQLVSEITKAIHENKK. A helical transmembrane segment spans residues 1392–1412; that stretch reads IVIASISAIVSIVNVLGIKTL. The HEAT 2 repeat unit spans residues 1819–1857; sequence LVPHIAELLEDDDEAVEIEVREGLVRVIEKVLGEPLDRY.

It belongs to the HEATR1/UTP10 family. In terms of assembly, component of the ribosomal small subunit (SSU) processome.

It localises to the nucleus. It is found in the nucleolus. Its subcellular location is the membrane. In terms of biological role, involved in nucleolar processing of pre-18S ribosomal RNA. Involved in ribosome biosynthesis. The protein is U3 small nucleolar RNA-associated protein 10 of Lodderomyces elongisporus (strain ATCC 11503 / CBS 2605 / JCM 1781 / NBRC 1676 / NRRL YB-4239) (Yeast).